Here is a 67-residue protein sequence, read N- to C-terminus: Protein SlyX homolog (67 aa).

The span at 48 to 60 (TSAPSTAAESNPQ) shows a compositional bias: polar residues. The interval 48-67 (TSAPSTAAESNPQHEIPPHY) is disordered.

Belongs to the SlyX family.

This chain is Protein SlyX homolog, found in Cupriavidus pinatubonensis (strain JMP 134 / LMG 1197) (Cupriavidus necator (strain JMP 134)).